Here is a 461-residue protein sequence, read N- to C-terminus: Transforming growth factor beta-1-induced transcript 1 protein (461 aa).

N-acetylmethionine is present on M1. The tract at residues 1–87 (MEDLDALLSD…PFSSSSGVLG (87 aa)) is disordered. The transcription activation stretch occupies residues 1 to 200 (MEDLDALLSD…GCPSPPGQTS (200 aa)). Residues 1 to 240 (MEDLDALLSD…CNKPIAGQVV (240 aa)) are interaction with PTK2B/PYK2. An LD motif 1 motif is present at residues 3 to 15 (DLDALLSDLETTT). T33 carries the phosphothreonine modification. Y38 is modified (phosphotyrosine). The segment covering 44–53 (TGSGESSGTT) has biased composition (low complexity). At Y60 the chain carries Phosphotyrosine. Residue S68 is modified to Phosphoserine. The interval 83 to 136 (SGVLGNGLCELDRLLQELNATQFNITDEIMSQFPSSKMAEGEEKEDQSEDKSSP) is interaction with PTK2/FAK1. Residues 92-104 (ELDRLLQELNATQ) carry the LD motif 2 motif. Positions 116–154 (PSSKMAEGEEKEDQSEDKSSPTVPPSPFPAPSKPSATSA) are disordered. The segment covering 137–147 (TVPPSPFPAPS) has biased composition (pro residues). Phosphoserine occurs at positions 141, 164, and 186. An LD motif 3 motif is present at residues 157–168 (ELDRLMASLSDF). Positions 171-204 (QNHLPASGPPQPPAASPTREGCPSPPGQTSKGSL) are disordered. Position 188 is a phosphothreonine (T188). S194 bears the Phosphoserine mark. The LD motif 4 motif lies at 203–215 (SLDTMLGLLQSDL). 4 consecutive LIM zinc-binding domains span residues 226 to 285 (GLCG…RFSP), 286 to 343 (RCGF…QLFA), 344 to 403 (PRCQ…QRGS), and 404 to 461 (LCAT…KLFG). S403 is subject to Phosphoserine. A Phosphothreonine modification is found at T407.

Belongs to the paxillin family. As to quaternary structure, homooligomer. Interacts with PPARG. Interacts with TRAF4. Interacts with CRIP2. Interacts with HSPB1. Interacts with ILK. Interacts with LIMS1 and LIMS2. Interacts with NCK2. Interacts with NUDT16L1. Interacts with PAK. Interacts with PTPN12. Interacts with TCF3. Interacts with TCF7L2. Interacts with VCL. Interacts (via LD motif 3) with GIT1. Also interacts with GIT2. Forms a complex with ARHGEF7. Interacts with AR/androgen receptor in a ligand-dependent manner. Interacts with CSK. Interacts with PTK2/FAK1 and PTK2B/PYK2. Interacts with SLC6A3. Interacts with SLC6A4. Interacts with NR3C1. Interacts with SMAD3. Interacts with MAPK15. Interacts with SRC. Interacts with LYN. Interacts with talin. Interacts (via LIM zinc-binding domain 2) with CBLC (via RING-type zinc finger); the interaction is direct and enhances CBLC E3 ubiquitin-protein ligase activity. Interacts with PARVA. Interacts with PXN. Phosphorylated by gonadotropin-releasing hormone-activated SRC. Ubiquitously expressed. Higher expression is detected in lung and spleen. Expression decreases during pregnancy in mammary glands. Expressed in all brain areas, with higher levels in cerebellum, prefrontal cortex and hypothalamus. Expressed in smooth muscle, myoepithelial cells and platelets (at protein level). Preferentially expressed in mesenchymal versus epithelial cells (at protein level).

The protein resides in the cell junction. The protein localises to the focal adhesion. Its subcellular location is the nucleus matrix. It is found in the cytoplasm. It localises to the cytoskeleton. Functionally, functions as a molecular adapter coordinating multiple protein-protein interactions at the focal adhesion complex and in the nucleus. Links various intracellular signaling modules to plasma membrane receptors and regulates the Wnt and TGFB signaling pathways. May also regulate SLC6A3 and SLC6A4 targeting to the plasma membrane hence regulating their activity. In the nucleus, functions as a nuclear receptor coactivator regulating glucocorticoid, androgen, mineralocorticoid and progesterone receptor transcriptional activity. May play a role in the processes of cell growth, proliferation, migration, differentiation and senescence. May have a zinc-dependent DNA-binding activity. The sequence is that of Transforming growth factor beta-1-induced transcript 1 protein (Tgfb1i1) from Mus musculus (Mouse).